We begin with the raw amino-acid sequence, 558 residues long: SPATS2-like protein (558 aa).

Ala2 is modified (N-acetylalanine). A compositionally biased stretch (basic residues) spans 63 to 79 (GKKKNNKRKRSKSKQHQ). 2 disordered regions span residues 63-134 (GKKK…EKKI) and 157-201 (KLSL…KSNT). The span at 80-92 (GNKDAKDKVERPE) shows a compositional bias: basic and acidic residues. The residue at position 120 (Ser120) is a Phosphoserine. Positions 271–344 (LMAEMDKVKE…ARFSCDIEQL (74 aa)) form a coiled coil. The interval 380–525 (TSGKQSNFSR…DTSEARPFRG (146 aa)) is disordered. Polar residues-rich tracts occupy residues 381-390 (SGKQSNFSRK), 410-432 (SLPS…GSSN), and 440-456 (QYHN…QGSG). Ser455 carries the phosphoserine modification. Over residues 469–485 (HEHRRQPHNGFRPKNKG) the composition is skewed to basic residues. The span at 513 to 522 (HAADTSEARP) shows a compositional bias: basic and acidic residues.

The protein belongs to the SPATS2 family.

It localises to the cytoplasm. It is found in the nucleus. The protein localises to the nucleolus. This is SPATS2-like protein (SPATS2L) from Homo sapiens (Human).